The sequence spans 448 residues: 3-phosphoshikimate 1-carboxyvinyltransferase (448 aa).

Residues Lys28, Ser29, and Arg33 each coordinate 3-phosphoshikimate. Lys28 lines the phosphoenolpyruvate pocket. Positions 100 and 128 each coordinate phosphoenolpyruvate. 3-phosphoshikimate contacts are provided by Ser173, Gln175, Asp326, and Lys353. Position 175 (Gln175) interacts with phosphoenolpyruvate. Asp326 acts as the Proton acceptor in catalysis. Phosphoenolpyruvate-binding residues include Arg357 and Arg405.

Belongs to the EPSP synthase family. As to quaternary structure, monomer.

The protein resides in the cytoplasm. It carries out the reaction 3-phosphoshikimate + phosphoenolpyruvate = 5-O-(1-carboxyvinyl)-3-phosphoshikimate + phosphate. The protein operates within metabolic intermediate biosynthesis; chorismate biosynthesis; chorismate from D-erythrose 4-phosphate and phosphoenolpyruvate: step 6/7. Functionally, catalyzes the transfer of the enolpyruvyl moiety of phosphoenolpyruvate (PEP) to the 5-hydroxyl of shikimate-3-phosphate (S3P) to produce enolpyruvyl shikimate-3-phosphate and inorganic phosphate. This Sinorhizobium fredii (strain NBRC 101917 / NGR234) protein is 3-phosphoshikimate 1-carboxyvinyltransferase.